We begin with the raw amino-acid sequence, 298 residues long: MSAEQNHGLEKDVGGPAAPAAAAPNAPAAAPGAPPAGMSAEEHRSRFGYGPLSHVNTKEAILPPFGGEFQPGLYKSVEARKFANPAPLGLSAFALTTFVLSCINMGARDITHPNIVIALAFGYGGLVQLLAGMWEMAVGNTFGATALSSYGGFWIAFAIVLTPGGFNIQTALTAENGDEAMFYNSFGLFLMGWFIFTTIMLFCTLRSTVAFFLLFLFLDLAFLLLGVGYIQRDDAGQPNPPVIKAGGFFGLLAAFAAWYNALAGIADSSNSFFIIPVAHFPWSPTGRARREKTERETV.

The disordered stretch occupies residues 1–43; sequence MSAEQNHGLEKDVGGPAAPAAAAPNAPAAAPGAPPAGMSAEEH. A compositionally biased stretch (low complexity) spans 14–37; it reads GGPAAPAAAAPNAPAAAPGAPPAG. Helical transmembrane passes span 86-106, 115-135, 146-166, 185-205, 210-230, and 245-265; these read APLG…INMG, IVIA…GMWE, ALSS…PGGF, SFGL…FCTL, AFFL…VGYI, and AGGF…LAGI.

This sequence belongs to the acetate uptake transporter (AceTr) (TC 2.A.96) family.

Its subcellular location is the cell membrane. The protein resides in the vacuole membrane. High affinity monocarboxylate transporter (MCT) involved in acetate uptake. Unlike other activities involved in acetate utilization, acpA is dispensable for growth on the acetate precursor ethanol. This chain is Acetate permease A, found in Emericella nidulans (strain FGSC A4 / ATCC 38163 / CBS 112.46 / NRRL 194 / M139) (Aspergillus nidulans).